A 189-amino-acid polypeptide reads, in one-letter code: TATA-box-binding protein 1 (189 aa).

2 consecutive repeat copies span residues 10–86 (IENV…FDKL) and 101–179 (VQNI…ISRL).

This sequence belongs to the TBP family.

In terms of biological role, general factor that plays a role in the activation of archaeal genes transcribed by RNA polymerase. Binds specifically to the TATA box promoter element which lies close to the position of transcription initiation. This Haloferax volcanii (strain ATCC 29605 / DSM 3757 / JCM 8879 / NBRC 14742 / NCIMB 2012 / VKM B-1768 / DS2) (Halobacterium volcanii) protein is TATA-box-binding protein 1 (tbp1).